We begin with the raw amino-acid sequence, 405 residues long: uncharacterized protein (405 aa).

Over 1–18 (MPEPVAEPALNGLRLNLR) the chain is Cytoplasmic. A helical transmembrane segment spans residues 19 to 39 (IVSIVMFNFASYLTIGLPLAV). At 40–46 (LPGYVHD) the chain is on the periplasmic side. Residues 47–67 (VMGFSAFWAGLVISLQYFATL) traverse the membrane as a helical segment. Residues 68 to 84 (LSRPHAGRYADSLGPKK) are Cytoplasmic-facing. A helical membrane pass occupies residues 85-105 (IVVFGLCGCFLSGLGYLTAGL). A topological domain (periplasmic) is located at residue Thr106. A helical membrane pass occupies residues 107–127 (ASLPVISLLLLCLGRVILGIG). Over 128–155 (QSFAGTGSTLWGVGVVGSLHIGRVISWN) the chain is Cytoplasmic. The helical transmembrane segment at 156–176 (GIVTYGAMAMGAPLGVVFYHW) threads the bilayer. Position 177 (Gly177) is a topological domain, periplasmic. The chain crosses the membrane as a helical span at residues 178–198 (GLQALALIIMGVALVAILLAI). The Cytoplasmic segment spans residues 199-223 (PRPTVKASKGKPLPFRAVLGRVWLY). The helical transmembrane segment at 224-244 (GMALALASAGFGVIATFITLF) threads the bilayer. Residues 245–251 (YDAKGWD) lie on the Periplasmic side of the membrane. Residues 252–272 (GAAFALTLFSCAFVGTRLLFP) traverse the membrane as a helical segment. Residues 273–282 (NGINRIGGLN) lie on the Cytoplasmic side of the membrane. A helical transmembrane segment spans residues 283–303 (VAMICFSVEIIGLLLVGVATM). The Periplasmic segment spans residues 304–308 (PWMAK). A helical membrane pass occupies residues 309-329 (IGVLLAGAGFSLVFPALGVVA). Residues 330–343 (VKAVPQQNQGAALA) are Cytoplasmic-facing. A helical membrane pass occupies residues 344-364 (TYTVFMDLSLGVTGPLAGLVM). Residue Ser365 is a topological domain, periplasmic. A helical membrane pass occupies residues 366-386 (WAGVPVIYLAAAGLVAIALLL). The Cytoplasmic portion of the chain corresponds to 387–405 (TWRLKKRPPEHVPEAASSS).

Belongs to the major facilitator superfamily. YhhS family.

It localises to the cell inner membrane. In terms of biological role, confers high-level resistance to glyphosate when overexpressed. Overexpression has no effect on intracellular arabinose concentrations. This is an uncharacterized protein from Escherichia coli (strain K12).